The primary structure comprises 485 residues: Aspartyl/glutamyl-tRNA(Asn/Gln) amidotransferase subunit B (485 aa).

The protein belongs to the GatB/GatE family. GatB subfamily. Heterotrimer of A, B and C subunits.

It carries out the reaction L-glutamyl-tRNA(Gln) + L-glutamine + ATP + H2O = L-glutaminyl-tRNA(Gln) + L-glutamate + ADP + phosphate + H(+). It catalyses the reaction L-aspartyl-tRNA(Asn) + L-glutamine + ATP + H2O = L-asparaginyl-tRNA(Asn) + L-glutamate + ADP + phosphate + 2 H(+). Its function is as follows. Allows the formation of correctly charged Asn-tRNA(Asn) or Gln-tRNA(Gln) through the transamidation of misacylated Asp-tRNA(Asn) or Glu-tRNA(Gln) in organisms which lack either or both of asparaginyl-tRNA or glutaminyl-tRNA synthetases. The reaction takes place in the presence of glutamine and ATP through an activated phospho-Asp-tRNA(Asn) or phospho-Glu-tRNA(Gln). The polypeptide is Aspartyl/glutamyl-tRNA(Asn/Gln) amidotransferase subunit B (Borreliella afzelii (strain PKo) (Borrelia afzelii)).